The sequence spans 632 residues: Tail spike protein (632 aa).

Residues 505–630 enclose the Peptidase S74 domain; sequence SDARCKTEPL…KRMQEALAAL (126 aa).

In terms of assembly, homotrimer. Proteolytic cleavage and release of the chaperone in the host cytosol stabilizes the folded protein. The cleavage gives rise to the mature tail spike protein but is not essential for catalytic activity.

The protein localises to the virion. Functionally, functions as a receptor binding protein (RBP) and probably mediates the attachment to the host capsular exopolysaccharides. Displays a depolymerase activity that specifically degrades the K5-type polysaccharides of Escherichia coli capsule. Its function is as follows. The C-terminal chaperone protein mediates homotrimerization and proper folding of the catalytic trimer. This is Tail spike protein (kflA) from Escherichia virus K5 (Bacteriophage K5).